Here is a 32-residue protein sequence, read N- to C-terminus: Cytochrome b6-f complex subunit 7 (32 aa).

A helical membrane pass occupies residues 9–29 (AILSSVLVLVGLAVGFLLLKV).

It belongs to the PetM family. In terms of assembly, the 4 large subunits of the cytochrome b6-f complex are cytochrome b6, subunit IV (17 kDa polypeptide, PetD), cytochrome f and the Rieske protein, while the 4 small subunits are PetG, PetL, PetM and PetN. The complex functions as a dimer.

It is found in the plastid. The protein localises to the chloroplast thylakoid membrane. Functionally, component of the cytochrome b6-f complex, which mediates electron transfer between photosystem II (PSII) and photosystem I (PSI), cyclic electron flow around PSI, and state transitions. The protein is Cytochrome b6-f complex subunit 7 of Porphyra purpurea (Red seaweed).